The primary structure comprises 506 residues: uncharacterized protein (506 aa).

Disordered regions lie at residues 104-144 (PNSS…ATSS) and 397-456 (QQQK…DQLP). Low complexity predominate over residues 130–144 (ESSPTLSSSSLATSS). Over residues 405–443 (IKDEDKNEKENKSENEEKEKEKEKEKEKEKEKEKEKEKE) the composition is skewed to basic and acidic residues. Residues 405–455 (IKDEDKNEKENKSENEEKEKEKEKEKEKEKEKEKEKEKENEEGEEDNGDQL) are a coiled coil.

This is an uncharacterized protein from Dictyostelium discoideum (Social amoeba).